Here is a 133-residue protein sequence, read N- to C-terminus: Small ribosomal subunit protein uS11 (133 aa).

The tract at residues 1-23 (MPPKTRGAVRKPRKKDKKNIALG) is disordered. Over residues 7–17 (GAVRKPRKKDK) the composition is skewed to basic residues.

This sequence belongs to the universal ribosomal protein uS11 family. Part of the 30S ribosomal subunit. Interacts with proteins S7 and S18. Binds to IF-3.

Functionally, located on the platform of the 30S subunit, it bridges several disparate RNA helices of the 16S rRNA. Forms part of the Shine-Dalgarno cleft in the 70S ribosome. The polypeptide is Small ribosomal subunit protein uS11 (Arthrobacter sp. (strain FB24)).